Consider the following 74-residue polypeptide: Sec-independent protein translocase protein TatA (74 aa).

A helical membrane pass occupies residues 1 to 21 (MGSMSWIHWVIVLGIVALLFG). The interval 51 to 74 (EVADNKAKSALPRTEAEAEELRKS) is disordered. Positions 64 to 74 (TEAEAEELRKS) are enriched in basic and acidic residues.

Belongs to the TatA/E family. As to quaternary structure, the Tat system comprises two distinct complexes: a TatABC complex, containing multiple copies of TatA, TatB and TatC subunits, and a separate TatA complex, containing only TatA subunits. Substrates initially bind to the TatABC complex, which probably triggers association of the separate TatA complex to form the active translocon.

It localises to the cell inner membrane. Part of the twin-arginine translocation (Tat) system that transports large folded proteins containing a characteristic twin-arginine motif in their signal peptide across membranes. TatA could form the protein-conducting channel of the Tat system. The chain is Sec-independent protein translocase protein TatA from Caulobacter vibrioides (strain ATCC 19089 / CIP 103742 / CB 15) (Caulobacter crescentus).